We begin with the raw amino-acid sequence, 453 residues long: Exodeoxyribonuclease 7 large subunit (453 aa).

It belongs to the XseA family. Heterooligomer composed of large and small subunits.

It localises to the cytoplasm. It catalyses the reaction Exonucleolytic cleavage in either 5'- to 3'- or 3'- to 5'-direction to yield nucleoside 5'-phosphates.. Bidirectionally degrades single-stranded DNA into large acid-insoluble oligonucleotides, which are then degraded further into small acid-soluble oligonucleotides. This Rickettsia typhi (strain ATCC VR-144 / Wilmington) protein is Exodeoxyribonuclease 7 large subunit.